A 370-amino-acid polypeptide reads, in one-letter code: MTQKEISIIHPRPSSIVAALYTLRDLNVDVAILHGPPGCSFKHARLLEEDGIHVVTTGLDENGFVFGGHDRLVEVINKSIELFNPKILGVVGTCASMIIGEEMHDAVLEANPDIPVIEVEVHAGYHNNTRGVLFALESALDAGIIDRKEFERQEYLLIKATEVEKRFGAASKEYLAPSRGDLKYKVAKRLIELLKEGKKGLVIMNAKKETGYMFADITLAVSEVAAALGKKENLVNMANIDPELGLPRVRQHAQYIMRDFIAHGVEIHEIIGGMDEYPIAGEKVSELIKEKYSDYDFAVITGVPHAIPMENLQHMELISITNGPRQVLPLKEMGHEHVLVEIDLHPKTLGVSEIVESEFGATLREVAKEA.

Belongs to the NifD/NifK/NifE/NifN family. Homodimer or monomer. The Ni-sirohydrochlorin a,c-diamide reductive cyclase complex is composed of a NifH homolog component CfbC and a NifD homolog component CfbD. Requires [4Fe-4S] cluster as cofactor.

The catalysed reaction is Ni-sirohydrochlorin a,c-diamide + 3 AH2 + ATP + H2O = 15,17(3)-seco-F430-17(3)-acid + 3 A + ADP + phosphate. Its function is as follows. Involved in the biosynthesis of the unique nickel-containing tetrapyrrole coenzyme F430, the prosthetic group of methyl-coenzyme M reductase (MCR), which plays a key role in methanogenesis and anaerobic methane oxidation. Catalyzes both the six-electron reduction of the tetrahydroporphyrin ring system and the gamma-lactamization of the c-acetamide side chain of Ni-sirohydrochlorin a,c-diamide to yield 15,17(3)-seco-F430-17(3)-acid (seco-F430), the last intermediate in the biosynthesis of the coenzyme F430. The protein is Ni-sirohydrochlorin a,c-diamide reductive cyclase complex, component CfbD of Methanosarcina acetivorans (strain ATCC 35395 / DSM 2834 / JCM 12185 / C2A).